Reading from the N-terminus, the 184-residue chain is Probable maltose O-acetyltransferase (184 aa).

Asn-84 is a binding site for acetyl-CoA. The active-site Proton donor/acceptor is the His-114. Acetyl-CoA-binding positions include Gly-141, Ser-159, 164–165 (TK), Arg-179, and Lys-182.

Belongs to the transferase hexapeptide repeat family. In terms of assembly, homodimer.

The catalysed reaction is D-maltose + acetyl-CoA = 1-O-acetylmaltose + CoA. Functionally, catalyzes the CoA-dependent transfer of an acetyl group to maltose and other sugars. Acetylates glucose exclusively at the C6 position and maltose at the C6 position of the non-reducing end glucosyl moiety. Is able to acetylate maltooligosaccharides. This Bacillus subtilis (strain 168) protein is Probable maltose O-acetyltransferase (maa).